Reading from the N-terminus, the 323-residue chain is Aquaporin-2 (323 aa).

Helical transmembrane passes span 32–54 (FLAVFVLMVFTEGCSASAIFTHR), 74–96 (YVAGGVTGAFLNPAIAVAFSVLG), and 103–123 (CFCYMIAQYLGAFLASLAIYA). Residues 85–87 (NPA) carry the NPA 1 motif. A glycan (N-linked (GlcNAc...) asparagine) is linked at Asn-143. 2 helical membrane passes run 161 to 181 (GAFVDQVFGTALLIIVVLSMV) and 193 to 213 (FPIAIGLLIVVLDISLAYNAG). The NPA 2 signature appears at 217-219 (NPS). Residues 243–263 (YTWFFVPVVGSHAGAIVGAVI) traverse the membrane as a helical segment. N-linked (GlcNAc...) asparagine glycosylation occurs at Asn-292.

It belongs to the MIP/aquaporin (TC 1.A.8) family.

It localises to the cell membrane. It catalyses the reaction H2O(in) = H2O(out). The catalysed reaction is glycerol(in) = glycerol(out). Functionally, aquaglyceroporin that may modulate the water content and osmolytes during anhydrobiosis. This Milnesium tardigradum (Water bear) protein is Aquaporin-2.